Consider the following 1161-residue polypeptide: MMKQAQQQPPPPPASSAATTTTAMAAAAAAAVVGSGCEGEKTKAPAINSELWHACAGPLVSLPPAGSLVVYFPQGHSEQVAASMQKDVDAHVPSYPNLPSKLICLLHNVTLHADPETDEVYAQMTLQPVTSYGKEALQLSELALKQARPQTEFFCKTLTASDTSTHGGFSVPRRAAEKIFPPLDFSMQPPAQELQARDLHDNVWTFRHIYRGQPKRHLLTTGWSLFVSGKRLFAGDSVIFVRDEKQQLLLGIRRANRQPTNISSSVLSSDSMHIGILAAAAHAAANNSPFTIFYNPRASPTEFVIPFAKYQKAVYGNQISLGMRFRMMFETEELGTRRYMGTITGISDLDPVRWKNSQWRNLQVGWDESAAGERRNRVSIWEIEPVAAPFFICPPPFFGAKRPRQLDDESSEMENLLKRAMPWLGEEICIKDPQTQNTIMPGLSLVQWMNMNMQQSSSFANTAMQSEYLRSLSNPNMQNLGAADLSRQLCLQNQLLQQNNIQFNTPKLSQQMQPVNELAKAGIPLNQLGVSTKPQEQIHDASNLQRQQPSMNHMLPLSQAQTNLGQAQVLVQNQMQQQHASSTQGQQPATSQPLLLPQQQQQQQQQQQQQQQQQQQQKLLQQQQQQLLLQQQQQLSKMPAQLSSLANQQFQLTDQQLQLQLLQKLQQQQQSLLSQPAVTLAQLPLIQEQQKLLLDMQQQLSNSQTLSQQQMMPQQSTKVPSQNTPLPLPVQQEPQQKLLQKQAMLADTSEAAVPPTTSVNVISTTGSPLMTTGATHSVLTEEIPSCSTSPSTANGNHLLQPILGRNKHCSMINTEKVPQSAAPMSVPSSLEAVTATPRMMKDSPKLNHNVKQSVVASKLANAGTGSQNYVNNPPPTDYLETASSATSVWLSQNDGLLHQNFPMSNFNQPQMFKDAPPDAEIHAANTSNNALFGINGDGPLGFPIGLGTDDFLSNGIDAAKYENHISTEIDNSYRIPKDAQQEISSSMVSQSFGASDMAFNSIDSTINDGGFLNRSSWPPAAPLKRMRTFTKVYKRGAVGRSIDMSQFSGYDELKHALARMFSIEGQLEERQRIGWKLVYKDHEDDILLLGDDPWEEFVGCVKCIRILSPQEVQQMSLEGCDLGNNIPPNQACSSSDGGNAWRARCDQNSGNPSNGSYEQFE.

Residues 1–20 (MMKQAQQQPPPPPASSAATT) form a disordered region. A DNA-binding region (TF-B3) is located at residues 154-256 (FCKTLTASDT…QLLLGIRRAN (103 aa)). The disordered stretch occupies residues 573–598 (NQMQQQHASSTQGQQPATSQPLLLPQ). The 85-residue stretch at 1027-1111 (RTFTKVYKRG…KCIRILSPQE (85 aa)) folds into the PB1 domain.

It belongs to the ARF family. As to quaternary structure, homodimers and heterodimers. In terms of tissue distribution, expressed in roots, culms, leaves and young panicles.

It is found in the nucleus. Functionally, auxin response factors (ARFs) are transcriptional factors that bind specifically to the DNA sequence 5'-TGTCTC-3' found in the auxin-responsive promoter elements (AuxREs). The chain is Auxin response factor 19 (ARF19) from Oryza sativa subsp. japonica (Rice).